A 91-amino-acid chain; its full sequence is Potassium channel toxin MeuTXK-beta-1 (91 aa).

The signal sequence occupies residues 1–19 (MQRNLVVLLFLGMVALSSC). Positions 54 to 91 (QFGCPAYQGYCDDHCQDIEKKEGFCHGFKCKCGIPMGF) constitute a BetaSPN-type CS-alpha/beta domain. Intrachain disulfides connect Cys57–Cys78, Cys64–Cys83, and Cys68–Cys85.

As to expression, expressed by the venom gland.

The protein localises to the secreted. Its function is as follows. Has a low affinity binding to potassium channels of rat brain synaptosomes. Displays weak antibacterial activity against Stenotrophomonas sp. Strongly inhibits the development of the Plasmodium berghei ookinetes. Displays slight hemolytic effect on mouse erythrocytes. Induces cytolysis on Xenopus oocytes at high concentrations. Is not toxic towards mice and towards the insect Tenebrio molitor. This is Potassium channel toxin MeuTXK-beta-1 from Mesobuthus eupeus (Lesser Asian scorpion).